The sequence spans 122 residues: Ribosome-binding factor A (122 aa).

The protein belongs to the RbfA family. In terms of assembly, monomer. Binds 30S ribosomal subunits, but not 50S ribosomal subunits or 70S ribosomes.

Its subcellular location is the cytoplasm. One of several proteins that assist in the late maturation steps of the functional core of the 30S ribosomal subunit. Associates with free 30S ribosomal subunits (but not with 30S subunits that are part of 70S ribosomes or polysomes). Required for efficient processing of 16S rRNA. May interact with the 5'-terminal helix region of 16S rRNA. The protein is Ribosome-binding factor A of Dichelobacter nodosus (strain VCS1703A).